We begin with the raw amino-acid sequence, 427 residues long: Dihydroorotase (427 aa).

Positions 60 and 62 each coordinate Zn(2+). Substrate contacts are provided by residues 62–64 (HFR) and Asn-94. Residues Asp-152, His-179, and His-232 each contribute to the Zn(2+) site. Position 278 (Asn-278) interacts with substrate. Asp-305 lines the Zn(2+) pocket. The active site involves Asp-305. Residues His-309 and 323-324 (FG) each bind substrate.

The protein belongs to the metallo-dependent hydrolases superfamily. DHOase family. Class I DHOase subfamily. Zn(2+) serves as cofactor.

The catalysed reaction is (S)-dihydroorotate + H2O = N-carbamoyl-L-aspartate + H(+). It participates in pyrimidine metabolism; UMP biosynthesis via de novo pathway; (S)-dihydroorotate from bicarbonate: step 3/3. Catalyzes the reversible cyclization of carbamoyl aspartate to dihydroorotate. The sequence is that of Dihydroorotase from Enterococcus faecalis (strain ATCC 700802 / V583).